Here is a 353-residue protein sequence, read N- to C-terminus: tRNA-specific 2-thiouridylase MnmA 2 (353 aa).

6 to 13 is a binding site for ATP; that stretch reads LLSGGVDS. The interaction with target base in tRNA stretch occupies residues 92–94; the sequence is NPD. Cys97 functions as the Nucleophile in the catalytic mechanism. The cysteines at positions 97 and 192 are disulfide-linked. Gly120 is a binding site for ATP. An interaction with tRNA region spans residues 142-144; that stretch reads KDQ. The active-site Cysteine persulfide intermediate is Cys192.

This sequence belongs to the MnmA/TRMU family.

The protein localises to the cytoplasm. It carries out the reaction S-sulfanyl-L-cysteinyl-[protein] + uridine(34) in tRNA + AH2 + ATP = 2-thiouridine(34) in tRNA + L-cysteinyl-[protein] + A + AMP + diphosphate + H(+). In terms of biological role, catalyzes the 2-thiolation of uridine at the wobble position (U34) of tRNA, leading to the formation of s(2)U34. The chain is tRNA-specific 2-thiouridylase MnmA 2 from Bacteroides fragilis (strain YCH46).